The primary structure comprises 142 residues: Small ribosomal subunit protein uS12 (142 aa).

The protein belongs to the universal ribosomal protein uS12 family. Part of the 30S ribosomal subunit.

Functionally, with S4 and S5 plays an important role in translational accuracy. Located at the interface of the 30S and 50S subunits. The sequence is that of Small ribosomal subunit protein uS12 from Thermoplasma volcanium (strain ATCC 51530 / DSM 4299 / JCM 9571 / NBRC 15438 / GSS1).